A 534-amino-acid chain; its full sequence is Inorganic phosphate transporter 1-6 (534 aa).

The Cytoplasmic portion of the chain corresponds to 1–29; sequence MGGGGGEQQQLEVLHALDVAKTQWYHFTA. The helical transmembrane segment at 30 to 50 threads the bilayer; it reads IVVAGMGFFTDAYDLFCISLV. Residues 51–75 lie on the Extracellular side of the membrane; the sequence is TKLLGRIYYRVDGSPSPGTLPPHVS. A helical transmembrane segment spans residues 76 to 96; it reads ASVNGVAFVGTLSGQLFFGWL. At 97–104 the chain is on the cytoplasmic side; it reads GDKLGRKR. The helical transmembrane segment at 105 to 125 threads the bilayer; the sequence is VYGITLMLMVLCSLASALSFG. Residues 126 to 127 are Extracellular-facing; it reads HT. Residues 128–148 traverse the membrane as a helical segment; the sequence is PTSVMATLCFFRFWLGFGIGG. At 149–168 the chain is on the cytoplasmic side; it reads DYPLSATIMSEYANKKTRGA. A helical membrane pass occupies residues 169 to 189; sequence FIAAVFAMQGFGIITGGLVAI. The Extracellular segment spans residues 190 to 216; that stretch reads LVSASFRAAFPAPPYGEDPVASTPPQA. Residues 217-237 form a helical membrane-spanning segment; sequence DFVWRIILMLGALPAALTYYW. The Cytoplasmic segment spans residues 238–294; the sequence is RTKMPETARYTALVANNAKQAAADMSKVLQVVEMRNIGNNGGSRRPFGLFSGEFVRR. A helical membrane pass occupies residues 295 to 315; that stretch reads HGLHLVGTSATWLLLDIAFYS. The Extracellular portion of the chain corresponds to 316-350; it reads QNLFQKDIFSAVGWIPKAATMSALEELFRIARAQT. A helical transmembrane segment spans residues 351-371; the sequence is LIALCGTVPGYWFTVALIDVV. Over 372–375 the chain is Cytoplasmic; that stretch reads GRFK. A helical membrane pass occupies residues 376-396; the sequence is IQAVGFFMMTLFMLTLALPYH. The Extracellular segment spans residues 397–405; the sequence is HWTAPGKNH. The chain crosses the membrane as a helical span at residues 406–426; the sequence is VGFLLLYGLTFFFANFGPNST. At 427-445 the chain is on the cytoplasmic side; it reads TFIVPAEIFPARLRATCHG. Residues 446–466 traverse the membrane as a helical segment; it reads ISAASGKLGAIVGSFGFLYLA. At 467–486 the chain is on the extracellular side; it reads QSPDRSKTEHGYPPGIGVRN. Residues 487 to 507 traverse the membrane as a helical segment; it reads SLFLLAACNLLGLLFTFLVPE. Residues 508 to 534 are Cytoplasmic-facing; sequence SKGKSLEEMSGDAEAQEEAPPPLQTVL. The interval 514 to 534 is disordered; it reads EEMSGDAEAQEEAPPPLQTVL.

Belongs to the major facilitator superfamily. Phosphate:H(+) symporter (TC 2.A.1.9) family. Highly expressed in leaves and at low levels in roots. Expressed in leaf xylem parenchyma cells.

The protein resides in the membrane. High-affinity transporter for external inorganic phosphate (Pi). Probably involved in Pi uptake, translocation and internal transport throughout the plant. In Oryza sativa subsp. japonica (Rice), this protein is Inorganic phosphate transporter 1-6 (PHT1-6).